We begin with the raw amino-acid sequence, 493 residues long: Protein translocase subunit SecY (493 aa).

The Cytoplasmic portion of the chain corresponds to 1-21 (MDSVIRALQPYFERIPSVERP). Residues 22–48 (KGHVHFREKFGWTAAILLLYFILSNVP) form a helical membrane-spanning segment. Topologically, residues 49–59 (VFGLSPESIDI) are extracellular. The segment at residues 60–67 (FAAYRALF) is an intramembrane region (helical). A discontinuously helical membrane pass occupies residues 60 to 88 (FAAYRALFAGSTGSIIALGIGPIVTASII). The stretch at 68-79 (AGSTGSIIALGI) is an intramembrane region. The helical intramembrane region spans 80 to 88 (GPIVTASII). The Cytoplasmic portion of the chain corresponds to 89 to 109 (LQLLVGAGIIKLDLTNPEDRA). Residues 110 to 134 (AYQDFQRFLVFVMIAVEAIPQIAGG) form a helical membrane-spanning segment. At 135–151 (LLKPDLNLAAQLGVSPG) the chain is on the extracellular side. The chain crosses the membrane as a helical span at residues 152–176 (IISFLIFIQLFIGGVLIVYMDEVVS). The Cytoplasmic portion of the chain corresponds to 177 to 182 (KWGIGS). A helical transmembrane segment spans residues 183-201 (GVSLFILAGIAQSIVVGLF). The Extracellular segment spans residues 202-244 (NWVIPPNSAMPAGIIPRWIWIAQNYPLDQLFTGSGLAFLLIQG). A helical membrane pass occupies residues 245–266 (GILALITTAAIILLVVFFEGTR). Residues 267 to 291 (VEIPLAHAVARGARGRFPIKLIYAS) lie on the Cytoplasmic side of the membrane. Residues 292–313 (VLPMIFVRALQANVVALGQVLH) traverse the membrane as a helical segment. Residues 314-367 (ARGVTIFGEFVNGKAVSGLMFFLQPVSSPYDWIPSLVKSQGAAFAAIPDWMIYL) are Extracellular-facing. A helical transmembrane segment spans residues 368 to 387 (HLLIDALILVVGGIIFAWFW). Residues 388–430 (VETSGMDARTVASQIAKSGMQVPGFRKSPQVLERVLSRYIPKV) lie on the Cytoplasmic side of the membrane. The helical transmembrane segment at 431–449 (TILGGAIIGILTLVANMLG) threads the bilayer. The Extracellular portion of the chain corresponds to 450 to 454 (TIGNV). The helical transmembrane segment at 455-469 (SGTGLLLAVSIAYRF) threads the bilayer. Over 470–493 (YEDLAKEQLTEMHPLIRRMLGEEA) the chain is Cytoplasmic.

The protein belongs to the SecY/SEC61-alpha family. Component of the Sec protein translocase complex. Heterotrimer consisting of alpha (SecY), beta (SecG) and gamma (SecE) subunits. The heterotrimers can form oligomers, although 1 heterotrimer is thought to be able to translocate proteins. Interacts with the ribosome. May interact with SecDF, and other proteins may be involved.

It is found in the cell membrane. Its function is as follows. The central subunit of the protein translocation channel SecYEG. Consists of two halves formed by TMs 1-5 and 6-10. These two domains form a lateral gate at the front which open onto the bilayer between TMs 2 and 7, and are clamped together by SecE at the back. The channel is closed by both a pore ring composed of hydrophobic SecY resides and a short helix (helix 2A) on the extracellular side of the membrane which forms a plug. The plug probably moves laterally to allow the channel to open. The ring and the pore may move independently. This Archaeoglobus fulgidus (strain ATCC 49558 / DSM 4304 / JCM 9628 / NBRC 100126 / VC-16) protein is Protein translocase subunit SecY.